The primary structure comprises 298 residues: UDP-N-acetylenolpyruvoylglucosamine reductase (298 aa).

One can recognise an FAD-binding PCMH-type domain in the interval 26–191 (KTGGEAEYLA…LSATFSLTPG (166 aa)). The active site involves arginine 170. The active-site Proton donor is the serine 220. The active site involves glutamate 290.

It belongs to the MurB family. The cofactor is FAD.

Its subcellular location is the cytoplasm. It carries out the reaction UDP-N-acetyl-alpha-D-muramate + NADP(+) = UDP-N-acetyl-3-O-(1-carboxyvinyl)-alpha-D-glucosamine + NADPH + H(+). It participates in cell wall biogenesis; peptidoglycan biosynthesis. Functionally, cell wall formation. This chain is UDP-N-acetylenolpyruvoylglucosamine reductase, found in Lactobacillus helveticus (strain DPC 4571).